Consider the following 64-residue polypeptide: Hypoxia-inducible lipid droplet-associated protein (64 aa).

The segment at 1–37 (MKFMLNLYVLGIMLTLLSIFVRVMESLGGLLESPLPG) is required for targeting to lipid droplets. A helical transmembrane segment spans residues 7–24 (LYVLGIMLTLLSIFVRVM). Residues 42 to 51 (TRGQLANTQP) are compositionally biased toward polar residues. The segment at 42–64 (TRGQLANTQPPKGLPDHPSRGVQ) is disordered. A compositionally biased stretch (basic and acidic residues) spans 55–64 (LPDHPSRGVQ).

It is found in the lipid droplet. It localises to the secreted. Its subcellular location is the membrane. Functionally, increases intracellular lipid accumulation. Stimulates expression of cytokines including IL6, MIF and VEGFA. Enhances cell growth and proliferation. This Mus musculus (Mouse) protein is Hypoxia-inducible lipid droplet-associated protein (Hilpda).